The sequence spans 128 residues: Holo-[acyl-carrier-protein] synthase (128 aa).

Residues aspartate 8 and glutamate 60 each contribute to the Mg(2+) site.

The protein belongs to the P-Pant transferase superfamily. AcpS family. It depends on Mg(2+) as a cofactor.

It localises to the cytoplasm. It catalyses the reaction apo-[ACP] + CoA = holo-[ACP] + adenosine 3',5'-bisphosphate + H(+). Its function is as follows. Transfers the 4'-phosphopantetheine moiety from coenzyme A to a Ser of acyl-carrier-protein. This Anaeromyxobacter sp. (strain K) protein is Holo-[acyl-carrier-protein] synthase.